We begin with the raw amino-acid sequence, 169 residues long: Large ribosomal subunit protein uL10 (169 aa).

Belongs to the universal ribosomal protein uL10 family. Part of the ribosomal stalk of the 50S ribosomal subunit. The N-terminus interacts with L11 and the large rRNA to form the base of the stalk. The C-terminus forms an elongated spine to which L12 dimers bind in a sequential fashion forming a multimeric L10(L12)X complex.

Forms part of the ribosomal stalk, playing a central role in the interaction of the ribosome with GTP-bound translation factors. In Orientia tsutsugamushi (strain Ikeda) (Rickettsia tsutsugamushi), this protein is Large ribosomal subunit protein uL10.